The chain runs to 128 residues: Small ribosomal subunit protein eS8 (128 aa).

Belongs to the eukaryotic ribosomal protein eS8 family. In terms of assembly, part of the 30S ribosomal subunit.

The protein is Small ribosomal subunit protein eS8 of Methanococcus vannielii (strain ATCC 35089 / DSM 1224 / JCM 13029 / OCM 148 / SB).